Reading from the N-terminus, the 362-residue chain is Peptide chain release factor 1 (362 aa).

At Q237 the chain carries N5-methylglutamine. The span at 285-295 shows a compositional bias: basic and acidic residues; sequence EEKRHAEEAST. Positions 285–311 are disordered; that stretch reads EEKRHAEEASTRRNLLGSGDRSDRIRT.

Belongs to the prokaryotic/mitochondrial release factor family. Post-translationally, methylated by PrmC. Methylation increases the termination efficiency of RF1.

Its subcellular location is the cytoplasm. In terms of biological role, peptide chain release factor 1 directs the termination of translation in response to the peptide chain termination codons UAG and UAA. In Photobacterium profundum (strain SS9), this protein is Peptide chain release factor 1.